Consider the following 664-residue polypeptide: Prelamin-A/C (664 aa).

Position 1 is an N-acetylmethionine (Met1). Positions 1-24 (METPSQRRATRSGAQASSTPLSPT) are disordered. The interval 1–33 (METPSQRRATRSGAQASSTPLSPTRITRLQEKE) is head. Residues 1-130 (METPSQRRAT…TKKEGDLMAA (130 aa)) form an interaction with MLIP region. Phosphothreonine is present on Thr3. Phosphoserine is present on Ser5. At Thr10 the chain carries Phosphothreonine. A phosphoserine mark is found at Ser12 and Ser18. Thr19 carries the phosphothreonine modification. Ser22 carries the post-translational modification Phosphoserine. One can recognise an IF rod domain in the interval 31–387 (EKEDLQELND…KLLEGEEERL (357 aa)). Lys32 carries the post-translational modification N6-acetyllysine; alternate. Residue Lys32 is modified to N6-succinyllysine; alternate. A Glycyl lysine isopeptide (Lys-Gly) (interchain with G-Cter in SUMO2); alternate cross-link involves residue Lys32. Positions 34–70 (DLQELNDRLAVYIDRVRSLETENAGLRLRITESEEVV) are coil 1A. Phosphoserine is present on residues Ser51, Ser66, and Ser71. The tract at residues 71-80 (SREVSGIKSA) is linker 1. Residues Lys78 and Lys97 each carry the N6-acetyllysine modification. The tract at residues 81 to 218 (YEAELGDARK…NIYSEELRET (138 aa)) is coil 1B. A Glycyl lysine isopeptide (Lys-Gly) (interchain with G-Cter in SUMO2) cross-link involves residue Lys97. Ser107 carries the post-translational modification Phosphoserine. N6-acetyllysine occurs at positions 108, 114, 123, 135, 144, and 155. Position 171 is an N6-acetyllysine; alternate (Lys171). At Lys171 the chain carries N6-succinyllysine; alternate. A Glycyl lysine isopeptide (Lys-Gly) (interchain with G-Cter in SUMO2); alternate cross-link involves residue Lys171. Lys180, Lys201, and Lys208 each carry N6-acetyllysine. Lys201 is covalently cross-linked (Glycyl lysine isopeptide (Lys-Gly) (interchain with G-Cter in SUMO2); alternate). A Glycyl lysine isopeptide (Lys-Gly) (interchain with G-Cter in SUMO); alternate cross-link involves residue Lys201. Residue Lys208 forms a Glycyl lysine isopeptide (Lys-Gly) (interchain with G-Cter in SUMO2) linkage. Residue Ser212 is modified to Phosphoserine. Residues Lys219 and Lys233 each participate in a glycyl lysine isopeptide (Lys-Gly) (interchain with G-Cter in SUMO2) cross-link. The segment at 219–242 (KRRHETRLVEIDNGKQREFESRLA) is linker 2. Lys233, Lys260, Lys265, and Lys270 each carry N6-acetyllysine. The tract at residues 243–383 (DALQDLRAQH…HAYRKLLEGE (141 aa)) is coil 2. Residue Lys260 forms a Glycyl lysine isopeptide (Lys-Gly) (interchain with G-Cter in SUMO2); alternate linkage. A Glycyl lysine isopeptide (Lys-Gly) (interchain with G-Cter in SUMO2); alternate cross-link involves residue Lys270. A phosphoserine mark is found at Ser277, Ser282, Ser301, and Ser307. A Glycyl lysine isopeptide (Lys-Gly) (interchain with G-Cter in SUMO2); alternate cross-link involves residue Lys311. 3 positions are modified to N6-acetyllysine: Lys311, Lys316, and Lys341. Glycyl lysine isopeptide (Lys-Gly) (interchain with G-Cter in SUMO2) cross-links involve residues Lys366 and Lys378. Positions 384–442 (EERLRLSPSPTSQRSRGRASSHSSQTQSGGSVTKKRKLESSESRSSFSQHARTSGRVAV) are disordered. The interval 384 to 664 (EERLRLSPSP…TQSPQNCSIM (281 aa)) is tail. A phosphoserine mark is found at Ser390, Ser392, Ser395, Ser398, Ser403, Ser404, Ser406, Ser407, and Ser414. Positions 403–414 (SSHSSQTQSGGS) are enriched in low complexity. Thr416 carries the post-translational modification Phosphothreonine. An N6-acetyllysine modification is found at Lys417. Residues Lys417 and Lys420 each participate in a glycyl lysine isopeptide (Lys-Gly) (interchain with G-Cter in SUMO2) cross-link. The Nuclear localization signal motif lies at 417–422 (KKRKLE). 4 positions are modified to phosphoserine: Ser423, Ser426, Ser429, and Ser431. An LTD domain is found at 428–545 (SSFSQHARTS…EEVAMRKLVR (118 aa)). Lys450 participates in a covalent cross-link: Glycyl lysine isopeptide (Lys-Gly) (interchain with G-Cter in SUMO2); alternate. An N6-acetyllysine mark is found at Lys450 and Lys457. Residues Ser458 and Ser463 each carry the phosphoserine modification. Residues Lys470 and Lys486 each participate in a glycyl lysine isopeptide (Lys-Gly) (interchain with G-Cter in SUMO2) cross-link. N6-acetyllysine is present on Lys486. Residues Thr496 and Thr505 each carry the phosphothreonine modification. Ser533 and Ser546 each carry phosphoserine. At Thr548 the chain carries Phosphothreonine. The tract at residues 555 to 577 (DEDGDDLLHHHHGSHGSSSGDPA) is disordered. Phosphoserine occurs at positions 568 and 571. A Glycyl lysine isopeptide (Lys-Gly) (interchain with G-Cter in SUMO2); alternate cross-link involves residue Lys597. A Glycyl lysine isopeptide (Lys-Gly) (interchain with G-Cter in SUMO1); alternate cross-link involves residue Lys597. The segment at 598–620 (ASASSSGAQVGGSISSGSSASSV) is disordered. Phosphoserine is present on residues Ser612, Ser613, Ser616, and Ser619. O-linked (GlcNAc) serine glycans are attached at residues Ser625 and Ser628. Residues Ser628, Ser632, and Ser636 each carry the phosphoserine modification. Positions 647–661 (LLGNSRPRTQSPQNC) are cleaved as a propeptide — removed in Lamin-A/C form. A Cysteine methyl ester modification is found at Cys661. Cys661 is lipidated: S-farnesyl cysteine. The propeptide at 662 to 664 (SIM) is removed in Prelamin-A/C form and in Lamin-A/C form.

Belongs to the intermediate filament family. In terms of assembly, homodimer of lamin A and lamin C. Lamin dimers then assemble into dimeric head-to-tail polymers. Ultimately, two head-to-tail polymers assemble laterally into a protofilament with a uniformly shaped rod of 3.5 nm in diameter. Interacts with lamin-associated polypeptides IA, IB and TMPO-alpha, RB1 and with emerin. Interacts with SREBF1, SREBF2, SUN2 and TMEM43. Interacts with TMEM201. Proteolytically processed isoform A interacts with NARF. Interacts with SUN1. Interacts with MLIP. Interacts with DMPK; may regulate nuclear envelope stability. Interacts with SUV39H1; the interaction increases stability of SUV39H1. Interacts with SYNE2. Interacts with ITSN1 isoform 2. Interacts with IFFO1; enables the formation of an interior nucleoskeleton that is recruited to DNA double-strand breaks. Interacts with EMD. As to quaternary structure, interacts (via C-terminus) with LEMD2 (via N-terminus) (in vitro). In terms of processing, proteolytic cleavage of the C-terminal of 18 residues of prelamin-A/C results in the production of lamin-A/C. The prelamin-A/C maturation pathway includes farnesylation of CAAX motif by protein farnesyltransferase (FNTA and FNTB), removal of the last three amino acids (-AAX) by RCE1/FACE2 and/or ZMPSTE24, methylation of the C-terminal cysteine by ICMT and endoproteolytic removal of the last 15 C-terminal amino acids by ZMPSTE24. Proteolytic cleavage requires prior farnesylation and methylation, and absence of these blocks cleavage. Farnesylation of prelamin-A/C facilitates nuclear envelope targeting. Post-translationally, phosphorylation plays a key role in lamin organization, subcellular localization and nuclear envelope disintegration. Phosphorylation by CDK1 at Ser-22 and Ser-392 at the onset of mitosis drives lamin disassembly and nuclear envelope breakdown. Phosphorylation at Ser-22 and Ser-392 during interphase promotes localization to the nucleoplasm and regulates lamina assembly. Phosphorylation at Ser-22, Ser-392 and Ser-628 during interphase causes redistribution between the nucleus and the cytoplasm. Phosphorylation at Ser-22 by CDK1 regulates matrix stiffness. Phosphorylation status of Ser-22 determines its localization between double-strand break (DSB) sites and the nuclear matrix. Phosphorylated by ATR at Ser-282 in response to DNA damage, leading to lamin disassembly and nuclear envelope rupture. Phosphorylation also regulates stability in micronuclei arising from genome instability: phosphorylation at Ser-395 by ATR in response to genome instability and double-stranded DNA breaks primes LMNA for subsequent phosphorylation at Ser-392 by CDK1 and micronuclei envelope rupture. The rupture of micronuclear envelope triggers the cGAS-STING pathway thereby activating the type I interferon response and innate immunity. In terms of processing, acetylation by KAT8 is required for nuclear architecture. Sumoylation is necessary for the localization to the nuclear envelope.

It localises to the nucleus lamina. It is found in the nucleus envelope. The protein resides in the nucleus. Its subcellular location is the nucleoplasm. The protein localises to the nucleus matrix. Lamins are intermediate filament proteins that assemble into a filamentous meshwork, and which constitute the major components of the nuclear lamina, a fibrous layer on the nucleoplasmic side of the inner nuclear membrane. Lamins provide a framework for the nuclear envelope, bridging the nuclear envelope and chromatin, thereby playing an important role in nuclear assembly, chromatin organization, nuclear membrane and telomere dynamics. Lamin A and C also regulate matrix stiffness by conferring nuclear mechanical properties. The structural integrity of the lamina is strictly controlled by the cell cycle, as seen by the disintegration and formation of the nuclear envelope in prophase and telophase, respectively. Lamin A and C are present in equal amounts in the lamina of mammals. Also invoved in DNA repair: recruited by DNA repair proteins XRCC4 and IFFO1 to the DNA double-strand breaks (DSBs) to prevent chromosome translocation by immobilizing broken DNA ends. Required for normal development of peripheral nervous system and skeletal muscle and for muscle satellite cell proliferation. Required for osteoblastogenesis and bone formation. Also prevents fat infiltration of muscle and bone marrow, helping to maintain the volume and strength of skeletal muscle and bone. Required for cardiac homeostasis. In terms of biological role, prelamin-A/C can accelerate smooth muscle cell senescence. It acts to disrupt mitosis and induce DNA damage in vascular smooth muscle cells (VSMCs), leading to mitotic failure, genomic instability, and premature senescence. The sequence is that of Prelamin-A/C (LMNA) from Sus scrofa (Pig).